The following is a 345-amino-acid chain: Phosphoribosylformylglycinamidine cyclo-ligase (345 aa).

This sequence belongs to the AIR synthase family. As to quaternary structure, homodimer.

Its subcellular location is the cytoplasm. It carries out the reaction 2-formamido-N(1)-(5-O-phospho-beta-D-ribosyl)acetamidine + ATP = 5-amino-1-(5-phospho-beta-D-ribosyl)imidazole + ADP + phosphate + H(+). The protein operates within purine metabolism; IMP biosynthesis via de novo pathway; 5-amino-1-(5-phospho-D-ribosyl)imidazole from N(2)-formyl-N(1)-(5-phospho-D-ribosyl)glycinamide: step 2/2. The sequence is that of Phosphoribosylformylglycinamidine cyclo-ligase from Escherichia coli O157:H7.